Consider the following 475-residue polypeptide: MASAVYFCDHNGKPLLSRRYRDDIPLSAIDKFPILLSDLEEQSNLIPPCLNHNGLEYLFIQHNDLYVVAIVTSLSANAAAIFTFLHKLVEVLSDYLKTVEEESIRDNFVIIYELLDEVMDYGIPQITETKMLKQYITQKSFKLVKSAKKKRNATRPPVALTNSVSWRPEGITHKKNEAFLDIVESINMLMTQKGQVLRSEIIGDVKVNSKLSGMPDLKLGINDKGIFSKYLDDDTNIPSASATTSDNNTETDKKPSITSSSATNKKKVNIELEDLKFHQCVRLSKFENEKIITFIPPDGKFDLMNYRLSTTIKPLIWCDVNVQVHSNSRIEIHCKAKAQIKRKSTATNVEILIPVPDDADTPTFKYSHGSLKYVPEKSAILWKIRSFPGGKEYSMSAELGLPSISNNEDGNRTMPKSNAEILKGPVQIKFQIPYFTTSGIQVRYLKINEPKLQYKSYPWVRYITQSGDDYTIRLT.

Positions 175-473 (KNEAFLDIVE…TQSGDDYTIR (299 aa)) constitute an MHD domain. The disordered stretch occupies residues 240 to 262 (ASATTSDNNTETDKKPSITSSSA).

This sequence belongs to the adaptor complexes medium subunit family. Adaptor protein complex 1 (AP-1) is a heterotetramer composed of two large adaptins (gamma-type subunit APL4 and beta-type subunit APL2), a medium adaptin (mu-type subunit APM1) and a small adaptin (sigma-type subunit APS1). AP-1 interacts with clathrin.

It localises to the cytoplasmic vesicle. It is found in the clathrin-coated vesicle membrane. The protein resides in the membrane. The protein localises to the clathrin-coated pit. In terms of biological role, component of the adaptor complexes which link clathrin to receptors in coated vesicles. Clathrin-associated protein complexes are believed to interact with the cytoplasmic tails of membrane proteins, leading to their selection and concentration. The AP-1 complex interacts directly with clathrin. AP57 is probably a subunit of the Golgi membrane adaptor. This chain is AP-1 complex subunit mu-1-I (APM1), found in Saccharomyces cerevisiae (strain ATCC 204508 / S288c) (Baker's yeast).